Reading from the N-terminus, the 166-residue chain is NAD(P)H-quinone oxidoreductase subunit I, chloroplastic (166 aa).

4Fe-4S ferredoxin-type domains follow at residues 55–84 (GRIH…VDWK) and 95–124 (LNYS…MTEE). [4Fe-4S] cluster is bound by residues Cys-64, Cys-67, Cys-70, Cys-74, Cys-104, Cys-107, Cys-110, and Cys-114.

The protein belongs to the complex I 23 kDa subunit family. NDH is composed of at least 16 different subunits, 5 of which are encoded in the nucleus. The cofactor is [4Fe-4S] cluster.

It is found in the plastid. Its subcellular location is the chloroplast thylakoid membrane. The catalysed reaction is a plastoquinone + NADH + (n+1) H(+)(in) = a plastoquinol + NAD(+) + n H(+)(out). It catalyses the reaction a plastoquinone + NADPH + (n+1) H(+)(in) = a plastoquinol + NADP(+) + n H(+)(out). Functionally, NDH shuttles electrons from NAD(P)H:plastoquinone, via FMN and iron-sulfur (Fe-S) centers, to quinones in the photosynthetic chain and possibly in a chloroplast respiratory chain. The immediate electron acceptor for the enzyme in this species is believed to be plastoquinone. Couples the redox reaction to proton translocation, and thus conserves the redox energy in a proton gradient. The sequence is that of NAD(P)H-quinone oxidoreductase subunit I, chloroplastic from Oxypappus scaber.